We begin with the raw amino-acid sequence, 27 residues long: Trypsin inhibitor 1 (27 aa).

As to quaternary structure, homodimer. Post-translationally, contains disulfide bonds. In terms of processing, glycosylated.

Its function is as follows. Inhibits trypsin (IC(50)=1.25 uM) but not chymotrypsin or papain. Has antibacterial activity against S.enterica ATCC 10708 (MIC=5 ug/ml) and S.aureus ATCC 25923 (MIC=5 ug/ml) but not against B.subtilis ATCC 6633 or P.aeruginosa ATCC 25619. Has no hemolytic activity against human erythrocytes. Is not toxic to mice. The protein is Trypsin inhibitor 1 of Jatropha curcas (Barbados nut).